The sequence spans 308 residues: Elongation factor Ts (308 aa).

The segment at 80 to 83 (TDFV) is involved in Mg(2+) ion dislocation from EF-Tu.

This sequence belongs to the EF-Ts family.

The protein resides in the cytoplasm. Functionally, associates with the EF-Tu.GDP complex and induces the exchange of GDP to GTP. It remains bound to the aminoacyl-tRNA.EF-Tu.GTP complex up to the GTP hydrolysis stage on the ribosome. This Sphingopyxis alaskensis (strain DSM 13593 / LMG 18877 / RB2256) (Sphingomonas alaskensis) protein is Elongation factor Ts.